Here is a 277-residue protein sequence, read N- to C-terminus: MDAPSSASGPTQPRLSPADALAALRASAPLTQCITNYVAMQIAANTLLAAGAAPAMIHTVEESGAFAGLARAVTINIGTLSPAWVDGMKAAIDGATAVGTPWVLDPVAHYASAYRSAVARDLLSRRPTILRGNASEILALAGGNTAARGVDAADPVTAAGAAASALAREYGSVVAVTGAVDLVTDGTRVAMVSGGSPWMPQVTALGCSLTCLMGAFAAVTAPLEATVAALTLFAEAGARAHAHSEGPGSFAWRFLDALAAVTPDDLTGTERVSWNAP.

A substrate-binding site is contributed by Met56. The ATP site is built by Arg131 and Thr177. Substrate is bound at residue Ala204.

The protein belongs to the Thz kinase family. It depends on Mg(2+) as a cofactor.

The enzyme catalyses 5-(2-hydroxyethyl)-4-methylthiazole + ATP = 4-methyl-5-(2-phosphooxyethyl)-thiazole + ADP + H(+). It participates in cofactor biosynthesis; thiamine diphosphate biosynthesis; 4-methyl-5-(2-phosphoethyl)-thiazole from 5-(2-hydroxyethyl)-4-methylthiazole: step 1/1. Catalyzes the phosphorylation of the hydroxyl group of 4-methyl-5-beta-hydroxyethylthiazole (THZ). This is Hydroxyethylthiazole kinase from Gemmatimonas aurantiaca (strain DSM 14586 / JCM 11422 / NBRC 100505 / T-27).